Consider the following 28-residue polypeptide: Turritoxin F21-2 (28 aa).

As to expression, expressed by the venom duct.

It localises to the secreted. Its function is as follows. Potent inhibitor of human alpha-3-beta-2 nAChRs (IC(50)=566.2 nM). Irreversibly inhibits the acetylcholine-induced response on human alpha-7/CHRNA7 (55% inhibition at 5.6 uM) and alpha-3-beta-2/CHRNA3-CHRNB2 (91% inhibition) nAChRs. In Polystira nobilis (Sea snail), this protein is Turritoxin F21-2.